The chain runs to 136 residues: MAHTNDTIADMLTRIRNATMARHESVAVPATRMTRSIARVLHEEGFVSEWKEEGEGIQARVVLRLKYKGKGRNCRPIINGLKRVSRPGLRVYRNHKELPRVLGGIGIAIISTSNGIMTDREARKQGIGGEVLCLVY.

The protein belongs to the universal ribosomal protein uS8 family. Part of the 30S ribosomal subunit. Contacts proteins S5 and S12.

Functionally, one of the primary rRNA binding proteins, it binds directly to 16S rRNA central domain where it helps coordinate assembly of the platform of the 30S subunit. This chain is Small ribosomal subunit protein uS8, found in Synechococcus sp. (strain JA-2-3B'a(2-13)) (Cyanobacteria bacterium Yellowstone B-Prime).